The chain runs to 357 residues: Fulicin peptides (357 aa).

The signal sequence occupies residues 1–17 (MQPTVLLILMTSCLTYQ). A propeptide spanning residues 18–119 (VIADKPKGNH…VDGSQGHLEP (102 aa)) is cleaved from the precursor. Asparagine 123 carries the post-translational modification D-asparagine. At valine 126 the chain carries Valine amide. Positions 130 to 194 (NTLPEEAGSF…YNTMNEDEAS (65 aa)) are excised as a propeptide. Valine amide occurs at positions 201 and 209. Leucine amide is present on residues leucine 217 and leucine 226. An isoleucine amide mark is found at isoleucine 233 and isoleucine 242. A valine amide mark is found at valine 250 and valine 259. The propeptide occupies 263 to 298 (NQGVFTVSPSSTKISFDDNYLPYLSSVDAGDLSDVN). Residue leucine 305 is modified to Leucine amide. A propeptide spanning residues 311 to 357 (TAEQDETSQRSNERLVALLQNTGFRKRLSRMLQNQRLVEHYPEFIGK) is cleaved from the precursor.

Found in central ganglia and the ventricles and atria of the heart.

Its function is as follows. Potentiates tetanic contraction of the penis retractor muscle at very low concentrations, and also shows modulatory actions on the activity of the buccal and ventricular muscles and the central ganglionic neurons. This is Fulicin peptides from Lissachatina fulica (Giant African land snail).